Reading from the N-terminus, the 408-residue chain is LL-diaminopimelate aminotransferase (408 aa).

The substrate site is built by Y15 and G42. Pyridoxal 5'-phosphate is bound by residues Y72, 108–109 (SK), Y132, N187, Y218, and 246–248 (SFS). K109, Y132, and N187 together coordinate substrate. Residue K249 is modified to N6-(pyridoxal phosphate)lysine. R257 and N292 together coordinate pyridoxal 5'-phosphate. 2 residues coordinate substrate: N292 and R388.

This sequence belongs to the class-I pyridoxal-phosphate-dependent aminotransferase family. LL-diaminopimelate aminotransferase subfamily. In terms of assembly, homodimer. It depends on pyridoxal 5'-phosphate as a cofactor.

The catalysed reaction is (2S,6S)-2,6-diaminopimelate + 2-oxoglutarate = (S)-2,3,4,5-tetrahydrodipicolinate + L-glutamate + H2O + H(+). The protein operates within amino-acid biosynthesis; L-lysine biosynthesis via DAP pathway; LL-2,6-diaminopimelate from (S)-tetrahydrodipicolinate (aminotransferase route): step 1/1. Functionally, involved in the synthesis of meso-diaminopimelate (m-DAP or DL-DAP), required for both lysine and peptidoglycan biosynthesis. Catalyzes the direct conversion of tetrahydrodipicolinate to LL-diaminopimelate. This is LL-diaminopimelate aminotransferase from Prochlorococcus marinus subsp. pastoris (strain CCMP1986 / NIES-2087 / MED4).